Here is a 446-residue protein sequence, read N- to C-terminus: Oxysterols receptor LXR-beta (446 aa).

Residues 1–69 form a disordered region; that stretch reads MSSPTSSLDT…PERKRKKGPA (69 aa). The interval 1-76 is transactivation AF-1; required for ligand-independent transactivation function; it reads MSSPTSSLDT…GPAPKMLGHE (76 aa). Over residues 17 to 28 the composition is skewed to low complexity; that stretch reads SPQPSTSATSPT. The segment at residues 75-152 is a DNA-binding region (nuclear receptor); that stretch reads HELCRVCGDK…AGMREQCVLS (78 aa). NR C4-type zinc fingers lie at residues 78 to 98 and 116 to 140; these read CRVC…CEGC and CRGS…LRKC. The segment at 159-201 is disordered; the sequence is KRIQKQQQQQPPPPSEPAASSSGRPAASPGTSEASSQGSGEGE. Positions 175–196 are enriched in low complexity; the sequence is PAASSSGRPAASPGTSEASSQG. The interval 205–446 is transactivation AF-2; required for ligand-dependent transactivation function; mediates interaction with CCAR2; sequence LTAAQELMIQ…LLSEIWDVHE (242 aa). Residues 208–446 enclose the NR LBD domain; it reads AQELMIQQLV…LLSEIWDVHE (239 aa). Glycyl lysine isopeptide (Lys-Gly) (interchain with G-Cter in SUMO2) cross-links involve residues Lys395 and Lys433.

This sequence belongs to the nuclear hormone receptor family. NR1 subfamily. In terms of assembly, forms a heterodimer with RXR. Interacts with CCAR2 (via N-terminus) in a ligand-independent manner. Interacts (when sumoylated) with GPS2; interaction with GPS2 onto hepatic acute phase protein promoters prevents N-Cor corepressor complex dissociation. Interacts with ABCA12 and ABCA1; this interaction is required for ABCA1 localization to the cell surface and is necessary for its normal activity and stability. Sumoylated by SUMO2 at Lys-395 and Lys-433 during the hepatic acute phase response, leading to promote interaction with GPS2 and prevent N-Cor corepressor complex dissociation. As to expression, ubiquitous.

It is found in the nucleus. Functionally, nuclear receptor that exhibits a ligand-dependent transcriptional activation activity. Binds preferentially to double-stranded oligonucleotide direct repeats having the consensus half-site sequence 5'-AGGTCA-3' and 4-nt spacing (DR-4). Regulates cholesterol uptake through MYLIP-dependent ubiquitination of LDLR, VLDLR and LRP8; DLDLR and LRP8. Interplays functionally with RORA for the regulation of genes involved in liver metabolism. Induces LPCAT3-dependent phospholipid remodeling in endoplasmic reticulum (ER) membranes of hepatocytes, driving SREBF1 processing and lipogenesis. Via LPCAT3, triggers the incorporation of arachidonate into phosphatidylcholines of ER membranes, increasing membrane dynamics and enabling triacylglycerols transfer to nascent very low-density lipoprotein (VLDL) particles. Via LPCAT3 also counteracts lipid-induced ER stress response and inflammation, likely by modulating SRC kinase membrane compartmentalization and limiting the synthesis of lipid inflammatory mediators. Plays an anti-inflammatory role during the hepatic acute phase response by acting as a corepressor: inhibits the hepatic acute phase response by preventing dissociation of the N-Cor corepressor complex. The chain is Oxysterols receptor LXR-beta (Nr1h2) from Mus musculus (Mouse).